The chain runs to 853 residues: Ion channel CASTOR (853 aa).

A compositionally biased stretch (low complexity) spans 1–30 (MSLDSEVSVSSSSGRDWFFPSPSFFRSSPS). Residues 1 to 55 (MSLDSEVSVSSSSGRDWFFPSPSFFRSSPSQYGRRFHTNSNTHSAPSSTYPSGIR) are disordered. Polar residues predominate over residues 38–51 (TNSNTHSAPSSTYP). A helical transmembrane segment spans residues 96–116 (QFGLQFALVTLTIVFLLLLLL). Residues 117 to 137 (RNTHLESQVNKLQGEILRLHA) are a coiled coil. The next 3 membrane-spanning stretches (helical) occupy residues 168 to 188 (NLAL…FKYI), 227 to 247 (LVLL…LFGV), and 279 to 299 (LVAV…LGLV). 2 consecutive RCK N-terminal domains span residues 320-461 (QNHT…ETVV) and 580-752 (PERI…DYVL).

It belongs to the castor/pollux (TC 1.A.1.23) family. Homooligomer. As to expression, expressed in infected and uninfected roots, leaves, seed pods, and flower buds.

Its subcellular location is the nucleus membrane. In terms of biological role, ion channel with a moderate preference for potassium over sodium and calcium. Involved in perinuclear calcium spiking but not in cytosolic calcium influx. Closed at negative voltages in presence of magnesium. Required for early signal transduction events leading to endosymbiosis. Acts early in a signal transduction chain leading from the perception of Nod factor to the activation of calcium spiking. Also involved in fungal entry into root epidermal cells during the establishment of the arbuscular mycorrhizal symbiosis. In Lotus japonicus (Lotus corniculatus var. japonicus), this protein is Ion channel CASTOR (CASTOR).